The primary structure comprises 99 residues: Co-chaperonin GroES (99 aa).

This sequence belongs to the GroES chaperonin family. As to quaternary structure, heptamer of 7 subunits arranged in a ring. Interacts with the chaperonin GroEL.

The protein localises to the cytoplasm. Functionally, together with the chaperonin GroEL, plays an essential role in assisting protein folding. The GroEL-GroES system forms a nano-cage that allows encapsulation of the non-native substrate proteins and provides a physical environment optimized to promote and accelerate protein folding. GroES binds to the apical surface of the GroEL ring, thereby capping the opening of the GroEL channel. The polypeptide is Co-chaperonin GroES (Corynebacterium efficiens (strain DSM 44549 / YS-314 / AJ 12310 / JCM 11189 / NBRC 100395)).